The primary structure comprises 475 residues: Ankyrin repeat, SAM and basic leucine zipper domain-containing protein 1 (475 aa).

Residues 1 to 25 form a disordered region; it reads MAAGTLRGLAVAGGGESSDSEDDGW. Residues S17, S18, and S20 each carry the phosphoserine modification. 6 ANK repeats span residues 45–74, 78–107, 110–144, 148–177, 181–210, and 214–243; these read EKNETFKKALTTGDISLVKELLDSGINVDS, YGWTPLMYAASVANAELVRFLLDRGANASF, DKLTILISACSARGSEEQVLKCVELLLSRNADPNT, RLMTPIMYAARDGHTQVVALLVAHGAEVNA, NGYTALTWAARQGHKNVILKLLELGANKML, and DGRTPSEIAKRNKHLEIFNFLSLTLNPLEG. The region spanning 272 to 334 is the SAM domain; sequence PYTAFGDLEI…KILAALKELE (63 aa).

In terms of assembly, interacts with DDX4, PIWIL1, RANBP9 and TDRD1. As to expression, expressed exclusively in testis and ovary with higher levels in testis.

It localises to the cytoplasm. Plays a central role during spermatogenesis by repressing transposable elements and preventing their mobilization, which is essential for the germline integrity. Acts via the piRNA metabolic process, which mediates the repression of transposable elements during meiosis by forming complexes composed of piRNAs and Piwi proteins and governs the methylation and subsequent repression of transposons. Its association with pi-bodies suggests a participation in the primary piRNAs metabolic process. Required prior to the pachytene stage to facilitate the production of multiple types of piRNAs, including those associated with repeats involved in regulation of retrotransposons. May act by mediating protein-protein interactions during germ cell maturation. The chain is Ankyrin repeat, SAM and basic leucine zipper domain-containing protein 1 from Mus musculus (Mouse).